The following is a 550-amino-acid chain: Sorting nexin-33 (550 aa).

The 61-residue stretch at 1-61 (MALKARALYS…PASYVEIQSS (61 aa)) folds into the SH3 domain. The tract at residues 62–152 (RSGSVQVDYS…QDSIASGKRG (91 aa)) is disordered. Residues 86–102 (YDDDDEEDDDDWDDWDD) are compositionally biased toward acidic residues. Positions 128–144 (SRPEYSHRPRPALERQD) are enriched in basic and acidic residues. A PX domain is found at 206–316 (FNCSVEEPTK…HFLGCQDEKQ (111 aa)). A BAR domain is found at 347-550 (LQDVEERVDV…EKTLHLYDEL (204 aa)).

This sequence belongs to the sorting nexin family.

The protein resides in the cytoplasm. It localises to the cytosol. It is found in the membrane. Its subcellular location is the cytoplasmic vesicle membrane. Functionally, plays a role in the reorganization of the cytoskeleton, endocytosis and cellular vesicle trafficking, both during interphase and at the end of mitotic cell divisions. Required for efficient progress through mitosis and cytokinesis. Required for normal formation of the cleavage furrow at the end of mitosis. Modulates endocytosis of cell-surface proteins. Promotes membrane tubulation (in vitro). May promote the formation of macropinosomes. The polypeptide is Sorting nexin-33 (snx33) (Xenopus laevis (African clawed frog)).